The chain runs to 412 residues: STAGA complex 65 subunit gamma (412 aa).

The segment at alanine 81–proline 107 is disordered. Position 106 is a phosphoserine (serine 106). A Glycyl lysine isopeptide (Lys-Gly) (interchain with G-Cter in SUMO2) cross-link involves residue lysine 269. Residues serine 321 and serine 332 each carry the phosphoserine modification. Positions glutamate 364–isoleucine 412 are disordered. Residues serine 384–serine 393 show a composition bias toward low complexity.

Component of the STAGA transcription coactivator-HAT complex, at least composed of SUPT3H, SUPT7L, GCN5L2, TAF5L, TAF6L, TADA3L, TAD1L, TAF10, TAF12 and TAF9. Sumoylated.

Its subcellular location is the nucleus. This is STAGA complex 65 subunit gamma (Supt7l) from Mus musculus (Mouse).